Here is a 201-residue protein sequence, read N- to C-terminus: Protease (201 aa).

Active-site residues include histidine 56, aspartate 73, and cysteine 121.

Belongs to the peptidase C5 family. As to quaternary structure, interacts with protease cofactor pVI-C; this interaction is necessary for protease activation.

It is found in the virion. The protein resides in the host nucleus. It catalyses the reaction Cleaves proteins of the adenovirus and its host cell at two consensus sites: -Yaa-Xaa-Gly-Gly-|-Xaa- and -Yaa-Xaa-Gly-Xaa-|-Gly- (in which Yaa is Met, Ile or Leu, and Xaa is any amino acid).. With respect to regulation, requires DNA and protease cofactor for maximal activation. Inside nascent virions, becomes partially activated by binding to the viral DNA, allowing it to cleave the cofactor that binds to the protease and fully activates it. Actin, like the viral protease cofactor, seems to act as a cofactor in the cleavage of cytokeratin 18 and of actin itself. Its function is as follows. Cleaves viral precursor proteins (pTP, pIIIa, pVI, pVII, pVIII, and pX) inside newly assembled particles giving rise to mature virions. Protease complexed to its cofactor slides along the viral DNA to specifically locate and cleave the viral precursors. Mature virions have a weakened organization compared to the unmature virions, thereby facilitating subsequent uncoating. Without maturation, the particle lacks infectivity and is unable to uncoat. Late in adenovirus infection, in the cytoplasm, may participate in the cytoskeleton destruction. Cleaves host cell cytoskeletal keratins K7 and K18. This Homo sapiens (Human) protein is Protease.